Reading from the N-terminus, the 447-residue chain is ATP-dependent protease ATPase subunit HslU (447 aa).

ATP-binding positions include I18, 60–65 (GVGKTE), D259, E325, and R397.

This sequence belongs to the ClpX chaperone family. HslU subfamily. As to quaternary structure, a double ring-shaped homohexamer of HslV is capped on each side by a ring-shaped HslU homohexamer. The assembly of the HslU/HslV complex is dependent on binding of ATP.

The protein localises to the cytoplasm. In terms of biological role, ATPase subunit of a proteasome-like degradation complex; this subunit has chaperone activity. The binding of ATP and its subsequent hydrolysis by HslU are essential for unfolding of protein substrates subsequently hydrolyzed by HslV. HslU recognizes the N-terminal part of its protein substrates and unfolds these before they are guided to HslV for hydrolysis. The protein is ATP-dependent protease ATPase subunit HslU of Burkholderia pseudomallei (strain K96243).